Reading from the N-terminus, the 584-residue chain is Mitochondrial sodium/calcium exchanger protein (584 aa).

The signal sequence occupies residues 1–26 (MAGRRLNLRWALSVLCVLLMAETVSG). Residues 27 to 95 (TRGSSTGAHI…GIFCHFPPSL (69 aa)) lie on the Extracellular side of the membrane. A glycan (N-linked (GlcNAc...) asparagine) is linked at Asn-60. Residues 96-116 (LPLAVTLYVSWLLYLFLILGV) form a helical membrane-spanning segment. Residues 117-140 (TAAKFFCPNLSAISTTLKLSHNVA) lie on the Cytoplasmic side of the membrane. Residues 141–161 (GVTFLAFGNGAPDIFSALVAF) form a helical membrane-spanning segment. At 162–168 (SDPHTAG) the chain is on the extracellular side. A helical membrane pass occupies residues 169–189 (LALGALFGAGVLVTTVVAGGI). The Cytoplasmic segment spans residues 190–200 (TILHPFMAASR). Residues 201–221 (PFFRDIVFYMVAVFLTFLMLF) form a helical membrane-spanning segment. Over 222-226 (RGRVT) the chain is Extracellular. A helical membrane pass occupies residues 227–247 (LAWALGYLGLYVFYVVTVILC). Residues 248–325 (TWIYQRQRRG…KWRRKSAYWK (78 aa)) are Cytoplasmic-facing. A Phosphoserine; by PKA modification is found at Ser-258. Residues 326 to 346 (ALKVFKLPVEFLLLLTVPVVD) form a helical membrane-spanning segment. The Extracellular segment spans residues 347-360 (PDKDDQNWKRPLNC). The helical transmembrane segment at 361–381 (LHLVISPLVVVLTLQSGTYGV) threads the bilayer. At 382 to 383 (YE) the chain is on the cytoplasmic side. The helical transmembrane segment at 384 to 404 (IGGLVPVWVVVVIAGTALASV) threads the bilayer. Over 405–416 (TFFATSDSQPPR) the chain is Extracellular. Residues 417 to 437 (LHWLFAFLGFLTSALWINAAA) traverse the membrane as a helical segment. Residues 438–445 (TEVVNILR) are Cytoplasmic-facing. A helical membrane pass occupies residues 446-466 (SLGVVFRLSNTVLGLTLLAWG). Residues 467–487 (NSIGDAFSDFTLARQGYPRMA) lie on the Extracellular side of the membrane. A helical transmembrane segment spans residues 488–508 (FSACFGGIIFNILVGVGLGCL). The Cytoplasmic portion of the chain corresponds to 509-524 (LQISRSHTEVKLEPDG). Residues 525–545 (LLVWVLAGALGLSLVFSLVSV) traverse the membrane as a helical segment. The Extracellular portion of the chain corresponds to 546–558 (PLQCFQLSRVYGF). The chain crosses the membrane as a helical span at residues 559–579 (CLLLFYLNFLVVALLTEFGVI). Residues 580-584 (HLKSM) are Cytoplasmic-facing.

Belongs to the Ca(2+):cation antiporter (CaCA) (TC 2.A.19) family. SLC24A subfamily. Phosphorylation at Ser-258 by PKA prevents calcium overload. As to expression, present in pancreatic beta-cells (at protein level).

The protein localises to the mitochondrion inner membrane. It catalyses the reaction Ca(2+)(in) + 3 Na(+)(out) = Ca(2+)(out) + 3 Na(+)(in). It carries out the reaction 3 Li(+)(out) + Ca(2+)(in) = 3 Li(+)(in) + Ca(2+)(out). Inhibited by the sodium/calcium exchanger inhibitor CGP-37157. Strongly inhibited by zinc. Mitochondrial sodium/calcium antiporter that mediates sodium-dependent calcium efflux from mitochondrion, by mediating the exchange of 3 sodium ions per 1 calcium ion. Plays a central role in mitochondrial calcium homeostasis by mediating mitochondrial calcium extrusion: calcium efflux is essential for mitochondrial function and cell survival, notably in cardiomyocytes. Regulates rates of glucose-dependent insulin secretion in pancreatic beta-cells during the first phase of insulin secretion: acts by mediating efflux of calcium from mitochondrion, thereby affecting cytoplasmic calcium responses. Required for store-operated Ca(2+) entry (SOCE) and Ca(2+) release-activated Ca(2+) (CRAC) channel regulation: sodium transport by SLC8B1 leads to promote calcium-shuttling that modulates mitochondrial redox status, thereby regulating SOCE activity. Involved in B-lymphocyte chemotaxis. Able to transport Ca(2+) in exchange of either Li(+) or Na(+), explaining how Li(+) catalyzes Ca(2+) exchange. In contrast to other members of the family its function is independent of K(+). This chain is Mitochondrial sodium/calcium exchanger protein, found in Homo sapiens (Human).